A 514-amino-acid chain; its full sequence is 2,3-bisphosphoglycerate-independent phosphoglycerate mutase (514 aa).

D14 and S64 together coordinate Mn(2+). Catalysis depends on S64, which acts as the Phosphoserine intermediate. Substrate is bound by residues H125, 155–156 (RD), R187, R193, 263–266 (RADR), and K336. Mn(2+) contacts are provided by D403, H407, D444, H445, and H463.

Belongs to the BPG-independent phosphoglycerate mutase family. In terms of assembly, monomer. Mn(2+) is required as a cofactor.

It catalyses the reaction (2R)-2-phosphoglycerate = (2R)-3-phosphoglycerate. Its pathway is carbohydrate degradation; glycolysis; pyruvate from D-glyceraldehyde 3-phosphate: step 3/5. In terms of biological role, catalyzes the interconversion of 2-phosphoglycerate and 3-phosphoglycerate. This chain is 2,3-bisphosphoglycerate-independent phosphoglycerate mutase, found in Shewanella halifaxensis (strain HAW-EB4).